The following is a 322-amino-acid chain: tRNA dimethylallyltransferase (322 aa).

Residue 19–26 (GPTASGKT) coordinates ATP. 21 to 26 (TASGKT) serves as a coordination point for substrate. 3 interaction with substrate tRNA regions span residues 44–47 (DSAL), 168–172 (QRIQR), and 255–260 (RCVGYR).

This sequence belongs to the IPP transferase family. Monomer. It depends on Mg(2+) as a cofactor.

It carries out the reaction adenosine(37) in tRNA + dimethylallyl diphosphate = N(6)-dimethylallyladenosine(37) in tRNA + diphosphate. Its function is as follows. Catalyzes the transfer of a dimethylallyl group onto the adenine at position 37 in tRNAs that read codons beginning with uridine, leading to the formation of N6-(dimethylallyl)adenosine (i(6)A). This is tRNA dimethylallyltransferase from Cupriavidus necator (strain ATCC 17699 / DSM 428 / KCTC 22496 / NCIMB 10442 / H16 / Stanier 337) (Ralstonia eutropha).